A 626-amino-acid chain; its full sequence is ATP-dependent RNA helicase cyt-19, mitochondrial (626 aa).

The Q motif motif lies at 74-103 (ADLAALGVHENVVRAITHGMGYENMTEVQS). The region spanning 106–297 (ISPALKGKDI…RSYIDKNNFE (192 aa)) is the Helicase ATP-binding domain. 119-126 (AKTGTGKT) contributes to the ATP binding site. Positions 241-244 (DEAD) match the DEAD box motif. In terms of domain architecture, Helicase C-terminal spans 329 to 493 (AMLELIEKAL…CASVNAADSG (165 aa)). The disordered stretch occupies residues 569 to 626 (LRVETREHSMRPMGSGPGHRRDFNSRGPRRQSDDPFENALHRAQDLDRRPTRRQQASF). The segment at 578–626 (MRPMGSGPGHRRDFNSRGPRRQSDDPFENALHRAQDLDRRPTRRQQASF) is RNA-binding. Over residues 607–617 (ALHRAQDLDRR) the composition is skewed to basic and acidic residues.

It belongs to the DEAD box helicase family.

Its subcellular location is the mitochondrion matrix. The enzyme catalyses ATP + H2O = ADP + phosphate + H(+). With respect to regulation, activated by exposed helices in a group I intron RNA. In terms of biological role, acts as an RNA chaperone to resolve non-native structures formed during RNA folding to promote mitochondrial group I, but also group II, intron splicing. Functions predominantly by disrupting accessible RNA secondary structure and depends on spontaneous openings in tightly packed RNAs to gain access to RNA helices. The protein is ATP-dependent RNA helicase cyt-19, mitochondrial of Neurospora crassa (strain ATCC 24698 / 74-OR23-1A / CBS 708.71 / DSM 1257 / FGSC 987).